The chain runs to 207 residues: Large ribosomal subunit protein uL4 (207 aa).

The interval 50-76 (KTKTVSEVSGTTKKPFKQKGTGNARQG) is disordered.

Belongs to the universal ribosomal protein uL4 family. In terms of assembly, part of the 50S ribosomal subunit.

Its function is as follows. One of the primary rRNA binding proteins, this protein initially binds near the 5'-end of the 23S rRNA. It is important during the early stages of 50S assembly. It makes multiple contacts with different domains of the 23S rRNA in the assembled 50S subunit and ribosome. In terms of biological role, forms part of the polypeptide exit tunnel. In Rickettsia canadensis (strain McKiel), this protein is Large ribosomal subunit protein uL4.